We begin with the raw amino-acid sequence, 762 residues long: Primary amine oxidase, liver isozyme (762 aa).

The signal sequence occupies residues 1 to 16 (MFIFIFLSLWTLLVMG). The tract at residues 23–54 (GSEEGVGKQCHPSLPPRCPSRSPSDQPWTHPD) is disordered. A glycan (N-linked (GlcNAc...) asparagine) is linked at Asn136. Cys197 and Cys198 are disulfide-bonded. The N-linked (GlcNAc...) asparagine glycan is linked to Asn231. 383–393 (YMDSGFGMGYF) serves as a coordination point for substrate. Residue Asp385 is the Proton acceptor of the active site. An intrachain disulfide couples Cys403 to Cys429. 467–472 (MLNYDY) lines the substrate pocket. Tyr470 functions as the Schiff-base intermediate with substrate; via topaquinone in the catalytic mechanism. A 2',4',5'-topaquinone modification is found at Tyr470. Residues His519 and His521 each contribute to the Cu cation site. Ca(2+)-binding residues include Asp528, Leu529, Asp530, Glu571, Phe662, and Asn664. N-linked (GlcNAc...) asparagine glycosylation occurs at Asn665. Ca(2+) contacts are provided by Glu666, Asp672, and Leu673. Cu cation is bound at residue His683. The cysteines at positions 733 and 740 are disulfide-linked.

Belongs to the copper/topaquinone oxidase family. Homodimer; disulfide-linked. The cofactor is Cu cation. Ca(2+) serves as cofactor. L-topaquinone is required as a cofactor. In terms of processing, topaquinone (TPQ) is generated by copper-dependent autoxidation of a specific tyrosyl residue. Liver.

It is found in the secreted. The protein localises to the extracellular space. The catalysed reaction is a primary methyl amine + O2 + H2O = an aldehyde + H2O2 + NH4(+). In Bos taurus (Bovine), this protein is Primary amine oxidase, liver isozyme.